A 609-amino-acid polypeptide reads, in one-letter code: UvrABC system protein C (609 aa).

Residues 16 to 94 (SSAGVYRMYD…IKQYMPKYNV (79 aa)) form the GIY-YIG domain. In terms of domain architecture, UVR spans 203 to 238 (QQVISALVDKMELAAERQAYEQAARFRDQIMALRKV).

This sequence belongs to the UvrC family. In terms of assembly, interacts with UvrB in an incision complex.

It localises to the cytoplasm. In terms of biological role, the UvrABC repair system catalyzes the recognition and processing of DNA lesions. UvrC both incises the 5' and 3' sides of the lesion. The N-terminal half is responsible for the 3' incision and the C-terminal half is responsible for the 5' incision. This chain is UvrABC system protein C, found in Shewanella baltica (strain OS185).